The primary structure comprises 59 residues: Chromatin protein Cren7 (59 aa).

This sequence belongs to the Cren7 family. As to quaternary structure, monomer. Methylated at multiple sites, to varying extents.

It is found in the chromosome. Its subcellular location is the cytoplasm. Its function is as follows. A chromatin protein, binds double-stranded DNA without sequence specificity. Constrains negative DNA supercoils. The polypeptide is Chromatin protein Cren7 (Pyrobaculum neutrophilum (strain DSM 2338 / JCM 9278 / NBRC 100436 / V24Sta) (Thermoproteus neutrophilus)).